The following is a 465-amino-acid chain: Hydroxyacid-oxoacid transhydrogenase, mitochondrial (465 aa).

K443 is modified (N6-acetyllysine). Phosphoserine is present on S450.

This sequence belongs to the iron-containing alcohol dehydrogenase family. Hydroxyacid-oxoacid transhydrogenase subfamily. Expressed in white and brown adipose tissues, liver, and kidney. Expression is differentiation-dependent during in vitro brown and white adipogenesis.

Its subcellular location is the mitochondrion. The catalysed reaction is (S)-3-hydroxybutanoate + 2-oxoglutarate = (R)-2-hydroxyglutarate + acetoacetate. It catalyses the reaction 4-hydroxybutanoate + 2-oxoglutarate = (R)-2-hydroxyglutarate + succinate semialdehyde. Functionally, catalyzes the cofactor-independent reversible oxidation of gamma-hydroxybutyrate (GHB) to succinic semialdehyde (SSA) coupled to reduction of 2-ketoglutarate (2-KG) to D-2-hydroxyglutarate (D-2-HG). L-3-hydroxybutyrate (L-3-OHB) is also a substrate for HOT when using 2-KG as hydrogen acceptor, resulting in the formation of D-2-HG. This is Hydroxyacid-oxoacid transhydrogenase, mitochondrial (Adhfe1) from Mus musculus (Mouse).